Here is a 101-residue protein sequence, read N- to C-terminus: Stefin-C (101 aa).

Met-1 carries the post-translational modification N-acetylmethionine. The Secondary area of contact signature appears at 49-53 (QVVAG).

It belongs to the cystatin family.

Its subcellular location is the cytoplasm. Strong inhibitor of papain and cathepsin L but poor inhibitor of cathepsin B. The chain is Stefin-C from Bos taurus (Bovine).